Here is a 258-residue protein sequence, read N- to C-terminus: tRNA (guanine-N(1)-)-methyltransferase (258 aa).

Residues Gly122 and Leu142 to Leu147 each bind S-adenosyl-L-methionine.

Belongs to the RNA methyltransferase TrmD family. Homodimer.

Its subcellular location is the cytoplasm. It catalyses the reaction guanosine(37) in tRNA + S-adenosyl-L-methionine = N(1)-methylguanosine(37) in tRNA + S-adenosyl-L-homocysteine + H(+). Functionally, specifically methylates guanosine-37 in various tRNAs. The chain is tRNA (guanine-N(1)-)-methyltransferase from Hahella chejuensis (strain KCTC 2396).